Consider the following 248-residue polypeptide: Probable S-methyl-5'-thioinosine phosphorylase (248 aa).

Residues Thr12 and 54 to 55 (RH) each bind phosphate. Residue Met187 participates in substrate binding. Thr188 provides a ligand contact to phosphate. Residue 211–213 (NWA) coordinates substrate.

The protein belongs to the PNP/MTAP phosphorylase family. MTAP subfamily. As to quaternary structure, homotrimer.

It carries out the reaction S-methyl-5'-thioinosine + phosphate = 5-(methylsulfanyl)-alpha-D-ribose 1-phosphate + hypoxanthine. It participates in purine metabolism; purine nucleoside salvage. In terms of biological role, catalyzes the reversible phosphorylation of S-methyl-5'-thioinosine (MTI) to hypoxanthine and 5-methylthioribose-1-phosphate. Involved in the breakdown of S-methyl-5'-thioadenosine (MTA), a major by-product of polyamine biosynthesis. Catabolism of (MTA) occurs via deamination to MTI and phosphorolysis to hypoxanthine. The protein is Probable S-methyl-5'-thioinosine phosphorylase of Xylella fastidiosa (strain Temecula1 / ATCC 700964).